The primary structure comprises 253 residues: Probable U3 small nucleolar RNA-associated protein 11 (253 aa).

Residues 1–26 form a disordered region; it reads MAAAFRKAAKSRQREHRERSQPGFRK. Glycyl lysine isopeptide (Lys-Gly) (interchain with G-Cter in SUMO2) cross-links involve residues Lys-74, Lys-83, and Lys-86. Thr-90 is subject to Phosphothreonine. Glycyl lysine isopeptide (Lys-Gly) (interchain with G-Cter in SUMO2) cross-links involve residues Lys-103, Lys-120, Lys-143, Lys-144, Lys-180, Lys-211, Lys-218, Lys-235, and Lys-236. Phosphoserine is present on Ser-241. A Glycyl lysine isopeptide (Lys-Gly) (interchain with G-Cter in SUMO2) cross-link involves residue Lys-246.

Belongs to the UTP11 family. As to quaternary structure, part of the small subunit (SSU) processome, composed of more than 70 proteins and the RNA chaperone small nucleolar RNA (snoRNA) U3.

Its subcellular location is the nucleus. It is found in the nucleolus. Its function is as follows. Part of the small subunit (SSU) processome, first precursor of the small eukaryotic ribosomal subunit. During the assembly of the SSU processome in the nucleolus, many ribosome biogenesis factors, an RNA chaperone and ribosomal proteins associate with the nascent pre-rRNA and work in concert to generate RNA folding, modifications, rearrangements and cleavage as well as targeted degradation of pre-ribosomal RNA by the RNA exosome. Involved in nucleolar processing of pre-18S ribosomal RNA. The sequence is that of Probable U3 small nucleolar RNA-associated protein 11 from Homo sapiens (Human).